Consider the following 350-residue polypeptide: Deoxyhypusine synthase-like protein (350 aa).

Belongs to the deoxyhypusine synthase family.

This is Deoxyhypusine synthase-like protein from Chlorobaculum parvum (strain DSM 263 / NCIMB 8327) (Chlorobium vibrioforme subsp. thiosulfatophilum).